We begin with the raw amino-acid sequence, 237 residues long: Uridylate kinase (237 aa).

11–14 (KLSG) serves as a coordination point for ATP. Residue G53 participates in UMP binding. Residues G54 and R58 each coordinate ATP. UMP contacts are provided by residues D73 and 134–141 (TGNPFFTT). Residues T161, Y167, and D170 each contribute to the ATP site.

This sequence belongs to the UMP kinase family. In terms of assembly, homohexamer.

It is found in the cytoplasm. It catalyses the reaction UMP + ATP = UDP + ADP. It participates in pyrimidine metabolism; CTP biosynthesis via de novo pathway; UDP from UMP (UMPK route): step 1/1. Inhibited by UTP. Catalyzes the reversible phosphorylation of UMP to UDP. The polypeptide is Uridylate kinase (Nitrosomonas europaea (strain ATCC 19718 / CIP 103999 / KCTC 2705 / NBRC 14298)).